A 75-amino-acid polypeptide reads, in one-letter code: Small ribosomal subunit protein bS18 (75 aa).

This sequence belongs to the bacterial ribosomal protein bS18 family. Part of the 30S ribosomal subunit. Forms a tight heterodimer with protein bS6.

Its function is as follows. Binds as a heterodimer with protein bS6 to the central domain of the 16S rRNA, where it helps stabilize the platform of the 30S subunit. This chain is Small ribosomal subunit protein bS18, found in Mycoplasma capricolum subsp. capricolum (strain California kid / ATCC 27343 / NCTC 10154).